The sequence spans 2494 residues: Nuclear receptor corepressor 1 (2494 aa).

Residues 1-33 show a composition bias toward polar residues; the sequence is MSSSGYPPNQGAFSTEQGRYSSHPVQYTFPSSR. 4 disordered regions span residues 1–38, 53–106, 134–170, and 198–222; these read MSSSGYPPNQGAFSTEQGRYSSHPVQYTFPSSRHQQEF, LLQQ…PRLD, SEVKKEQGLPSKHETTSSPLSGQPGEEQEASPSKLSK, and QQQLEEEAAKPPEPEKPVSPPPVEQ. The segment covering 71 to 82 has biased composition (basic and acidic residues); the sequence is PVSDRPQDRRQG. Positions 83 to 92 are enriched in polar residues; that stretch reads YEQQYHSVTQ. Composition is skewed to basic and acidic residues over residues 93–106, 134–148, and 204–213; these read NEHEALESKRPRLD, SEVKKEQGLPSKHET, and EAAKPPEPEK. The segment at 154–304 is interaction with tbl1xr1; the sequence is SGQPGEEQEA…REQNICQRYD (151 aa). Residues 168–208 are a coiled coil; the sequence is LSKEELIQSMDRVDREIAKVEQQILKLKKKQQQLEEEAAKP. The 52-residue stretch at 427-478 folds into the SANT 1 domain; sequence QFMNVWTDHEKEIFKEKFVQHPKNFGLIASYLERKTVSDCVLYYYLTKKNEN. Disordered regions lie at residues 488–638, 671–913, 981–1007, 1081–1124, 1413–1434, 1488–1585, 1745–1845, and 1912–1987; these read PKRR…VEHG, NLLQ…LDSK, RQRQEQLSLESRMSASPGNMSKSPNMD, GARL…GTPG, IHEIPRQDLGSQESRKTPESSR, MGER…TQRE, LAFP…QESI, and EVVK…AHTK. Basic and acidic residues-rich tracts occupy residues 502–525 and 535–548; these read AQEEKEIEKVEEEKAERNDKKEEE and KEELRDGTKDRTDA. The stretch at 502–549 forms a coiled coil; that stretch reads AQEEKEIEKVEEEKAERNDKKEEERREEEEKEEKEELRDGTKDRTDAI. Low complexity predominate over residues 582–616; it reads ASEAAAAANAASTATTAPATTTSTTATTTTAALVP. Residues 617–629 show a composition bias toward pro residues; sequence VAPPPEEPTPPPT. The SANT 2 domain maps to 622–668; it reads EEPTPPPTQEQSLVEHGRNWGAIAKMVGSKSESQCKNFYFNYKRRHN. The segment covering 692–702 has biased composition (polar residues); that stretch reads QCESVASTVSA. A coiled-coil region spans residues 698-726; sequence STVSAQEDEENEASNEEENAEDSEGAENS. Over residues 703 to 722 the composition is skewed to acidic residues; the sequence is QEDEENEASNEEENAEDSEG. Over residues 723–741 the composition is skewed to low complexity; that stretch reads AENSSDTESAPSPSPAEAA. Polar residues predominate over residues 766-779; the sequence is ASKSVSDSSPTPTV. The span at 829-864 shows a compositional bias: basic and acidic residues; the sequence is AEPDEVESKPSESAEVKIEEDTKDQDMERLMDRAEA. Polar residues-rich tracts occupy residues 881-892, 993-1004, and 1104-1124; these read ESQSDNDSSATC, MSASPGNMSKSP, and ATSSDKPSFITGGSISQGTPG. Basic and acidic residues predominate over residues 1488–1504; that stretch reads MGERSKYEDTKSSEAIR. Polar residues predominate over residues 1508-1519; sequence TSVVSSGPSVLR. A compositionally biased stretch (low complexity) spans 1548 to 1561; sequence PSPMSRSSPMARSA. The stretch at 1771–1810 forms a coiled coil; the sequence is VSAERERERERDRERDREREKEQRERERDRERERERLAAA. Basic and acidic residues predominate over residues 1773-1807; sequence AERERERERDRERDREREKEQRERERDRERERERL. The span at 1835-1845 shows a compositional bias: polar residues; sequence PSPSVRAQESI. Basic and acidic residues predominate over residues 1914–1935; the sequence is VKPKEMKHDPARSEESLSRRNV. Positions 1953–1972 are enriched in low complexity; it reads QSPYTSSSFSGSKSQGQPSP. The segment covering 1978–1987 has biased composition (basic and acidic residues); sequence AGKEKTAHTK. The CORNR box 1 motif lies at 2008-2012; it reads IDVII. The interval 2018–2105 is disordered; that stretch reads SDKDGRDRNS…PSPQQTIPGH (88 aa). The segment covering 2027–2036 has biased composition (low complexity); that stretch reads SQSSDSSSSH. A compositionally biased stretch (basic and acidic residues) spans 2039 to 2048; that stretch reads HRYDAPRDTI. The span at 2088 to 2102 shows a compositional bias: polar residues; the sequence is RYRQQQESPSPQQTI. Positions 2119 to 2123 match the CORNR box 2 motif; it reads ICQII. Polar residues predominate over residues 2135-2177; the sequence is QALQQPPASTFQSTNPSSTPVRTKASSRFSPESQVQPVHNQRP. The disordered stretch occupies residues 2135-2216; it reads QALQQPPAST…YEPISPPQAP (82 aa). Residues 2186–2205 show a composition bias toward basic and acidic residues; sequence VLDRPRGRPGKSPDRGHISE. A CORNR box 3 motif is present at residues 2322–2326; that stretch reads LEDII. Disordered regions lie at residues 2346 to 2413 and 2446 to 2494; these read GVAQ…SVHS and MLNS…DSDE. Positions 2376–2390 are enriched in basic residues; it reads HKQKLISKYGSRKTK. Polar residues-rich tracts occupy residues 2446-2472 and 2485-2494; these read MLNSTPPSSMSCAPTSMTQTSAHQQSR and QYETLSDSDE.

It belongs to the N-CoR nuclear receptor corepressors family. Forms a large corepressor complex that contains sin3a/b, histone deacetylases hdac1 and hdac2, rbbp4 and possibly rbbp7. Interacts with the thyroid receptor (TR, composed of rxra and thrb) and the retinoid acid receptor (RAR, composed of rxra and rara) in the absence of ligand. Interacts with tbl1xr1. Interacts with zbtb33/kaiso.

The protein localises to the nucleus. In terms of biological role, mediates transcriptional repression by certain nuclear receptors. Participates in complexes which promote histone deacetylation and the formation of repressive chromatin structures which may impede access by the basal transcription machinery. In association with hdac3, may play a role in the regulation of the circadian clock. In Xenopus tropicalis (Western clawed frog), this protein is Nuclear receptor corepressor 1 (ncor1).